The chain runs to 478 residues: Zinc finger protein 410 (478 aa).

Positions 187–213 are disordered; that stretch reads NAKTSSNGENVHLGSGDGQSKDSGPLP. C2H2-type zinc fingers lie at residues 219-243, 249-273, 279-303, 309-333, and 339-362; these read LKCT…LKTH, FICP…MRTH, FMCH…RRIH, FLCE…LVVH, and HQCQ…RKHH. The Zn(2+) site is built by Cys-221, Cys-226, His-239, His-243, Cys-251, Cys-256, His-269, His-273, Cys-281, Cys-286, His-299, His-303, Cys-311, Cys-316, His-329, His-333, Cys-341, Cys-344, His-357, and His-361.

Interacts with CDKN2A/p14ARF. In terms of processing, sumoylated. Sumoylation increases its half-life, possibly by blocking ubiquitin-mediated degradation. O-glycosylated. O-GlcNAcylation may occur in response to increasing glucose levels and affect transcription factor activity. As to expression, widely expressed.

The protein localises to the nucleus. It is found in the chromosome. Functionally, transcription factor that binds to the sequence motif 5'-CATCCCATAATA-3', and is specifically required to silence expression of fetal hemoglobin in adult erythroid cells. Prevents expression of fetal hemoglobin genes HBG1 and HBG2 through CHD4: acts as a direct transcriptional activator of CHD4, a central component of the NuRD complex that represses transcription of fetal hemoglobin genes HBG1 and HBG2 in erythroid cells. May also activate transcription of matrix-remodeling genes such as MMP1 during fibroblast senescence. May activate transcription of the gap junction gene GJC1, perhaps in response to increasing glucose. However, recent studies suggest that ZNF410 is dedicated to regulate expression of a single gene: CHD4. The protein is Zinc finger protein 410 of Homo sapiens (Human).